The chain runs to 71 residues: Alpha-cobratoxin (71 aa).

Intrachain disulfides connect Cys3–Cys20, Cys14–Cys41, Cys26–Cys30, Cys45–Cys56, and Cys57–Cys62.

This sequence belongs to the three-finger toxin family. Long-chain subfamily. Type II alpha-neurotoxin sub-subfamily. Monomer, homo- or heterodimer with cytotoxins 1 (P60305), 2 (AC P01445), and 3 (AC P01446); disulfide-linked. In homodimer alpha-cobratoxin, selective reduction of Cys(26)-Cys(30) in one subunit does not affect the activity against the alpha-7/CHRNA7 nAChR, whereas its reduction in both subunits almost prevents alpha-7/CHRNA7 nAChR recognition. On the contrary, reduction of one or both Cys(26)-Cys(30) disulfide bonds in the homodimer considerably potentiates inhibition of the alpha-3-beta-2/CHRNA3-CHRNB2 nAChR by the toxin. Expressed by the venom gland.

It is found in the secreted. In terms of biological role, monomer: binds with high affinity to muscular (alpha-1-beta-1-gamma-delta/CHRNA1-CHRNB1-CHRNG-CHRND) nAChR (tested on Torpedo californica, Kd=0.2-4.5 nM) and neuronal alpha-7/CHRNA7 nicotinic acetylcholine receptors (Kd=13-105 nM). Also inhibits GABA(A) channels. Heteropentamer targets studied are composed of alpha-1-beta-3-gamma-2 (GABRA1-GABRB3-GABRG2) subunits (IC(50)=236 nM), alpha-1-beta-2-gamma-2 (GABRA1-GABRB2-GABRG2) subunits (IC(50)=469 nM), alpha-2-beta-2-gamma-2 (GABRA2-GABRB2-GABRG2) subunits (IC(50)=485 nM), alpha-5-beta-3-gamma-2 (GABRA5-GABRB3-GABRG2) subunits (IC(50)=635 nM), and alpha-2-beta-3-gamma-2 (GABRA2-GABRB3-GABRG2) subunits (IC(50)=1099 nM) (activated by 10 uM GABA). Homodimer: binds with high affinity (but lower than the monomeric form) to muscular (IC(50)=9.7 nM) and with low affinity to neuronal alpha-7/CHRNA7 nAChRs (IC(50)=1370 nM). However, it acquires (compared to the monomeric form) the capacity to block alpha-3/beta-2 (CHRNA3/CHRNB2) nAChRs. Functionally, heterodimer with cytotoxin 3 (AC P01446): is slightly more active than the homodimer in inhibiting alpha-7/CHRNA7 nAChR and is considerably more active in blocking the alpha-3-beta-2/CHRNA3-CHRNB2 nAChR. The polypeptide is Alpha-cobratoxin (Naja kaouthia (Monocled cobra)).